The primary structure comprises 876 residues: DNA double-strand break repair Rad50 ATPase (876 aa).

Residues Arg11, 31–37 (NGAGKTT), and Gln139 contribute to the ATP site. 2 coiled-coil regions span residues 188-528 (RERV…EDRL) and 575-710 (SGVE…RKER). The 98-residue stretch at 387 to 484 (EETLQSEYEE…RLESVRRELE (98 aa)) folds into the Zinc-hook domain. Zn(2+) contacts are provided by Cys432 and Cys435.

It belongs to the SMC family. RAD50 subfamily. In terms of assembly, homodimer. Forms a heterotetramer composed of two Mre11 subunits and two Rad50 subunits. Requires Zn(2+) as cofactor.

Its function is as follows. Part of the Rad50/Mre11 complex, which is involved in the early steps of DNA double-strand break (DSB) repair. The complex may facilitate opening of the processed DNA ends to aid in the recruitment of HerA and NurA. Rad50 controls the balance between DNA end bridging and DNA resection via ATP-dependent structural rearrangements of the Rad50/Mre11 complex. This is DNA double-strand break repair Rad50 ATPase from Methanopyrus kandleri (strain AV19 / DSM 6324 / JCM 9639 / NBRC 100938).